The sequence spans 630 residues: DNA topoisomerase 4 subunit B (630 aa).

ATP-binding positions include Y5, N42, D69, 110-116 (GLHGVGI), and K334. In terms of domain architecture, Toprim spans 412–525 (TELFLVEGDS…NGHVYVALPP (114 aa)). 3 residues coordinate Mg(2+): E418, D490, and D492.

It belongs to the type II topoisomerase family. ParE type 1 subfamily. As to quaternary structure, heterotetramer composed of ParC and ParE. The cofactor is Mg(2+). Mn(2+) serves as cofactor. Requires Ca(2+) as cofactor.

It carries out the reaction ATP-dependent breakage, passage and rejoining of double-stranded DNA.. Topoisomerase IV is essential for chromosome segregation. It relaxes supercoiled DNA. Performs the decatenation events required during the replication of a circular DNA molecule. In Salmonella typhi, this protein is DNA topoisomerase 4 subunit B.